We begin with the raw amino-acid sequence, 378 residues long: Alcohol dehydrogenase 1 (378 aa).

Cys-48 is a binding site for Zn(2+). Residue 49–53 coordinates NAD(+); that stretch reads HTDVL. Residues His-69, Cys-99, Cys-102, Cys-105, Cys-113, and Cys-177 each contribute to the Zn(2+) site. Residues 202 to 207, Asp-226, Lys-231, 274 to 276, 297 to 299, and 321 to 323 contribute to the NAD(+) site; these read GIGTVG, TGV, IGA, and TTF.

The protein belongs to the zinc-containing alcohol dehydrogenase family. Class-IV subfamily. In terms of assembly, homodimer. Zn(2+) is required as a cofactor. Expressed in flowers and disk florets.

It functions in the pathway isoprenoid biosynthesis. This chain is Alcohol dehydrogenase 1, found in Tanacetum cinerariifolium (Dalmatian daisy).